The sequence spans 746 residues: Histone-lysine N-methyltransferase EZH2 (746 aa).

The tract at residues 1–340 is interaction with DNMT1, DNMT3A and DNMT3B; it reads MGQTGKKSEK…AKEFAAALTA (340 aa). A Phosphoserine; by PKB/AKT1 modification is found at serine 21. Residues 39–68 are interaction with EED; sequence KSMFSSNRQKILERTEILNQEWKQRRIQPV. Serine 75 carries O-linked (GlcNAc) serine glycosylation. Serine 76 is modified (phosphoserine). Residues 180–222 are disordered; sequence QYNDDDDDDDGDDPEEREEKQKDLEDHRDDKESRPPRKFPSDK. Residues 182–195 are compositionally biased toward acidic residues; it reads NDDDDDDDGDDPEE. Residues 196 to 222 show a composition bias toward basic and acidic residues; sequence REEKQKDLEDHRDDKESRPPRKFPSDK. The segment at 329-522 is interaction with CDYL; it reads EGAKEFAAAL…SSNHVYNYQP (194 aa). Threonine 339 is subject to Phosphothreonine. A disordered region spans residues 340–426; the sequence is AERIKTPPKR…PIKMKPNIEP (87 aa). Threonine 345 carries the phosphothreonine; by CDK1 and CDK2 modification. Residues 345-357 show a composition bias toward basic residues; that stretch reads TPPKRPGGRRRGR. Phosphoserine is present on residues serine 363 and serine 366. Threonine 367 carries the phosphothreonine modification. The segment covering 374 to 385 has biased composition (basic and acidic residues); sequence ESKDTDSDREAG. At threonine 487 the chain carries Phosphothreonine. One can recognise a CXC domain in the interval 503–605; that stretch reads CRKIQLKKDG…SKNVSCKNCS (103 aa). In terms of domain architecture, SET spans 612–727; that stretch reads KHLLLAPSDV…TGEELFFDYR (116 aa). Lysine 634 is covalently cross-linked (Glycyl lysine isopeptide (Lys-Gly) (interchain with G-Cter in SUMO2)).

This sequence belongs to the class V-like SAM-binding methyltransferase superfamily. Histone-lysine methyltransferase family. EZ subfamily. In terms of assembly, component of the PRC2/EED-EZH2 complex, which includes EED, EZH2, SUZ12, RBBP4 and RBBP7 and possibly AEBP2. The minimum components required for methyltransferase activity of the PRC2/EED-EZH2 complex are EED, EZH2 and SUZ12. The PRC2 complex may also interact with DNMT1, DNMT3A, DNMT3B and PHF1 via the EZH2 subunit and with SIRT1 via the SUZ12 subunit. Interacts with HDAC1 and HDAC2. Binds ATRX via the SET domain. Interacts with PRAME. Interacts with CDYL. Interacts with BMAL1, CLOCK and CRY1. Interacts with DNMT3L; the interaction is direct. Interacts with EZHIP; the interaction blocks EZH2 methyltransferase activity. Interacts with ZNF263; recruited to the SIX3 promoter along with other proteins involved in chromatin modification and transcriptional corepression where it contributes to transcriptional repression. Interacts with ARMC12. Interacts with ZMYND8; the interaction is dependent on the presence of chromatin. Interacts with DDX18; this interaction inhibits the PRC2 complex. Post-translationally, phosphorylated by AKT1. Phosphorylation by AKT1 reduces methyltransferase activity. Phosphorylation at Thr-345 by CDK1 and CDK2 promotes maintenance of H3K27me3 levels at EZH2-target loci, thus leading to epigenetic gene silencing. In terms of processing, sumoylated. Glycosylated: O-GlcNAcylation at Ser-75 by OGT increases stability of EZH2 and facilitates the formation of H3K27me3 by the PRC2/EED-EZH2 complex.

Its subcellular location is the nucleus. The catalysed reaction is L-lysyl(27)-[histone H3] + 3 S-adenosyl-L-methionine = N(6),N(6),N(6)-trimethyl-L-lysyl(27)-[histone H3] + 3 S-adenosyl-L-homocysteine + 3 H(+). Polycomb group (PcG) protein. Catalytic subunit of the PRC2/EED-EZH2 complex, which methylates 'Lys-9' (H3K9me) and 'Lys-27' (H3K27me) of histone H3, leading to transcriptional repression of the affected target gene. Able to mono-, di- and trimethylate 'Lys-27' of histone H3 to form H3K27me1, H3K27me2 and H3K27me3, respectively. Displays a preference for substrates with less methylation, loses activity when progressively more methyl groups are incorporated into H3K27, H3K27me0 &gt; H3K27me1 &gt; H3K27me2. Compared to EZH1-containing complexes, it is more abundant in embryonic stem cells and plays a major role in forming H3K27me3, which is required for embryonic stem cell identity and proper differentiation. The PRC2/EED-EZH2 complex may also serve as a recruiting platform for DNA methyltransferases, thereby linking two epigenetic repression systems. EZH2 can also methylate non-histone proteins such as the transcription factor GATA4 and the nuclear receptor RORA. Regulates the circadian clock via histone methylation at the promoter of the circadian genes. Essential for the CRY1/2-mediated repression of the CLOCK-BMAL1 transcriptional activation of PER1/2. Involved in the di and trimethylation of 'Lys-27' of histone H3 on PER1/2 promoters which is necessary for the CRY1/2 proteins to inhibit transcription. The sequence is that of Histone-lysine N-methyltransferase EZH2 (EZH2) from Macaca fascicularis (Crab-eating macaque).